The sequence spans 231 residues: MIYLRKANERGHANHGWLDSWHTFSFANYYDPNFMGFSALRVINDDVIEAGQGFGTHPHKDMEILTYVLEGTVEHQDSMGNKEQVPAGEFQIMSAGTGIRHSEYNPSSTERLHLYQIWIMPEENGITPRYEQRRFDAVQGKQLVLSPDARDGSLKVHQDMELYRWALLKDEQSVHQIAAERRVWIQVVKGNVTINGVKASISDGLAIWDEQAISIHADSDSEVLLFDLPPV.

Positions 57, 59, 101, and 103 each coordinate a divalent metal cation.

Belongs to the pirin family. It depends on Zn(2+) as a cofactor. Co(2+) serves as cofactor. The cofactor is Fe(2+).

The enzyme catalyses quercetin + O2 = 2-(3,4-dihydroxybenzoyloxy)-4,6-dihydroxybenzoate + CO. Its pathway is flavonoid metabolism; quercetin degradation. In terms of biological role, has quercetin 2,3-dioxygenase activity in vitro. Its physiological role is unknown; however, may provide a mechanism that would avoid inhibition of key cellular proteins, such as DNA gyrase, by quercetin. In Escherichia coli O157:H7, this protein is Quercetin 2,3-dioxygenase (yhhW).